Reading from the N-terminus, the 197-residue chain is Imidazoleglycerol-phosphate dehydratase (197 aa).

The protein belongs to the imidazoleglycerol-phosphate dehydratase family.

It is found in the cytoplasm. The enzyme catalyses D-erythro-1-(imidazol-4-yl)glycerol 3-phosphate = 3-(imidazol-4-yl)-2-oxopropyl phosphate + H2O. It functions in the pathway amino-acid biosynthesis; L-histidine biosynthesis; L-histidine from 5-phospho-alpha-D-ribose 1-diphosphate: step 6/9. In Pseudomonas fluorescens (strain Pf0-1), this protein is Imidazoleglycerol-phosphate dehydratase.